A 487-amino-acid chain; its full sequence is Lysophospholipid acyltransferase 5 (487 aa).

An N-acetylalanine modification is found at alanine 2. Transmembrane regions (helical) follow at residues 44-64 (LIFS…YLFY), 67-87 (SYLI…FNFG), 111-131 (ITAV…GYYY), 178-198 (ILGV…GAFL), 236-256 (LGLV…EDYL), and 285-305 (VTCW…FNGF). Asparagine 308 carries an N-linked (GlcNAc...) asparagine glycan. Active-site residues include asparagine 338 and histidine 374. The next 3 helical transmembrane spans lie at 364-384 (GLSL…LICF), 422-442 (LVQQ…FCLF), and 453-473 (SIYF…PYVY). The short motif at 484 to 487 (KKRE) is the Di-lysine motif element.

This sequence belongs to the membrane-bound acyltransferase family.

It is found in the endoplasmic reticulum membrane. The catalysed reaction is a 1-acyl-sn-glycero-3-phosphocholine + an acyl-CoA = a 1,2-diacyl-sn-glycero-3-phosphocholine + CoA. It carries out the reaction a 1-acyl-sn-glycero-3-phosphoethanolamine + an acyl-CoA = a 1,2-diacyl-sn-glycero-3-phosphoethanolamine + CoA. The enzyme catalyses a 1-acyl-sn-glycero-3-phospho-L-serine + an acyl-CoA = a 1,2-diacyl-sn-glycero-3-phospho-L-serine + CoA. It catalyses the reaction (9Z,12Z)-octadecadienoyl-CoA + a 1-acyl-sn-glycero-3-phosphocholine = 1-acyl-2-(9Z,12Z)-octadecadienoyl-sn-glycero-3-phosphocholine + CoA. The catalysed reaction is (5Z,8Z,11Z,14Z)-eicosatetraenoyl-CoA + a 1-acyl-sn-glycero-3-phosphocholine = 1-acyl-2-(5Z,8Z,11Z,14Z-eicosatetraenoyl)-sn-glycero-3-phosphocholine + CoA. It carries out the reaction dodecanoyl-CoA + 1-hexadecanoyl-sn-glycero-3-phosphocholine = 1-hexadecanoyl-2-dodecanoyl-sn-glycero-3-phosphocholine + CoA. The enzyme catalyses octadecanoyl-CoA + 1-hexadecanoyl-sn-glycero-3-phosphocholine = 1-hexadecanoyl-2-octadecanoyl-sn-glycero-3-phosphocholine + CoA. It catalyses the reaction 1-dodecanoyl-sn-glycero-3-phosphocholine + hexadecanoyl-CoA = 1-dodecanoyl-2-hexadecanoyl-sn-glycero-3-phosphocholine + CoA. The catalysed reaction is 1-tetradecanoyl-sn-glycero-3-phosphocholine + hexadecanoyl-CoA = 1-tetradecanoyl-2-hexadecanoyl-sn-glycero-3-phosphocholine + CoA. It carries out the reaction 1-hexadecanoyl-sn-glycero-3-phosphocholine + hexadecanoyl-CoA = 1,2-dihexadecanoyl-sn-glycero-3-phosphocholine + CoA. The enzyme catalyses 1-octadecanoyl-sn-glycero-3-phosphocholine + hexadecanoyl-CoA = 1-octadecanoyl-2-hexadecanoyl-sn-glycero-3-phosphocholine + CoA. It catalyses the reaction 1-(9Z-octadecenoyl)-sn-glycero-3-phosphocholine + hexadecanoyl-CoA = 1-(9Z-octadecenoyl)-2-hexadecanoyl-sn-glycero-3-phosphocholine + CoA. The catalysed reaction is (9Z)-hexadecenoyl-CoA + 1-hexadecanoyl-sn-glycero-3-phosphocholine = 1-hexadecanoyl-2-(9Z-hexadecenoyl)-sn-glycero-3-phosphocholine + CoA. It carries out the reaction 1-hexadecanoyl-sn-glycero-3-phosphocholine + (9Z)-octadecenoyl-CoA = 1-hexadecanoyl-2-(9Z-octadecenoyl)-sn-glycero-3-phosphocholine + CoA. The enzyme catalyses (9Z,12Z)-octadecadienoyl-CoA + 1-hexadecanoyl-sn-glycero-3-phosphocholine = 1-hexadecanoyl-2-(9Z,12Z-octadecadienoyl)-sn-glycero-3-phosphocholine + CoA. It catalyses the reaction 1-dodecanoyl-sn-glycero-3-phosphocholine + (5Z,8Z,11Z,14Z)-eicosatetraenoyl-CoA = 1-dodecanoyl-2-(5Z,8Z,11Z,14Z)-eicosatetraenoyl-sn-glycero-3-phosphocholine + CoA. The catalysed reaction is (5Z,8Z,11Z,14Z)-eicosatetraenoyl-CoA + 1-hexadecanoyl-sn-glycero-3-phosphocholine = 1-hexadecanoyl-2-(5Z,8Z,11Z,14Z-eicosatetraenoyl)-sn-glycero-3-phosphocholine + CoA. It carries out the reaction 1-octadecanoyl-sn-glycero-3-phosphocholine + (5Z,8Z,11Z,14Z)-eicosatetraenoyl-CoA = 1-octadecanoyl-2-(5Z,8Z,11Z,14Z-eicosatetraenoyl)-sn-glycero-3-phosphocholine + CoA. The enzyme catalyses 1-eicosanoyl-sn-glycero-3-phosphocholine + (5Z,8Z,11Z,14Z)-eicosatetraenoyl-CoA = 1-eicosanoyl-2-(5Z,8Z,11Z,14Z)-eicosatetraenoyl-sn-glycero-3-phosphocholine + CoA. It catalyses the reaction 1-(9Z-octadecenoyl)-sn-glycero-3-phosphocholine + (9Z)-octadecenoyl-CoA = 1,2-di-(9Z-octadecenoyl)-sn-glycero-3-phosphocholine + CoA. The catalysed reaction is 1-(9Z-octadecenoyl)-sn-glycero-3-phosphocholine + (9Z,12Z)-octadecadienoyl-CoA = 1-(9Z)-octadecenoyl-2-(9Z,12Z)-octadecadienoyl-sn-glycero-3-phosphocholine + CoA. It carries out the reaction 1-(9Z-octadecenoyl)-sn-glycero-3-phosphocholine + (5Z,8Z,11Z,14Z)-eicosatetraenoyl-CoA = 1-(9Z)-octadecenoyl-2-(5Z,8Z,11Z,14Z)-icosatetraenoyl-sn-glycero-3-phosphocholine + CoA. The enzyme catalyses a 1-acyl-sn-glycero-3-phosphoethanolamine + (9Z,12Z)-octadecadienoyl-CoA = 1-acyl-2-(9Z,12Z)-octadecadienoyl-sn-glycero-3-phosphoethanolamine + CoA. It catalyses the reaction 1-(9Z-octadecenoyl)-sn-glycero-3-phosphoethanolamine + (9Z,12Z)-octadecadienoyl-CoA = 1-(9Z)-octadecenoyl-2-(9Z,12Z)-octadecadienoyl-sn-glycero-3-phosphoethanolamine + CoA. The catalysed reaction is 1-(10Z-heptadecenoyl)-sn-glycero-3-phosphoethanolamine + (9Z,12Z)-octadecadienoyl-CoA = 1-(10Z-heptadecenoyl)-2-(9Z,12Z-octadecadienoyl)-sn-glycero-3-phosphoethanolamine + CoA. It carries out the reaction a 1-acyl-sn-glycero-3-phosphoethanolamine + (5Z,8Z,11Z,14Z)-eicosatetraenoyl-CoA = 1-acyl-2-(5Z,8Z,11Z,14Z)-eicosatetraenoyl-sn-glycero-3-phosphoethanolamine + CoA. The enzyme catalyses 1-hexadecanoyl-sn-glycero-3-phosphoethanolamine + (5Z,8Z,11Z,14Z)-eicosatetraenoyl-CoA = 1-hexadecanoyl-2-(5Z,8Z,11Z,14Z-eicosatetraenoyl)-sn-glycero-3-phosphoethanolamine + CoA. It catalyses the reaction 1-(9Z-octadecenoyl)-sn-glycero-3-phosphoethanolamine + (5Z,8Z,11Z,14Z)-eicosatetraenoyl-CoA = 1-(9Z)-octadecenoyl-2-(5Z,8Z,11Z,14Z)-eicosatetraenoyl-sn-glycero-3-phosphoethanolamine + CoA. The catalysed reaction is 1-(10Z-heptadecenoyl)-sn-glycero-3-phosphoethanolamine + (5Z,8Z,11Z,14Z)-eicosatetraenoyl-CoA = 1-(10Z-heptadecenoyl)-2-(5Z,8Z,11Z,14Z-eicosatetraenoyl)-sn-glycero-3-phosphoethanolamine + CoA. It carries out the reaction a 1-O-(1Z-alkenyl)-sn-glycero-3-phosphoethanolamine + (5Z,8Z,11Z,14Z)-eicosatetraenoyl-CoA = 1-O-(1Z)-alkenyl-2-(5Z,8Z,11Z,14Z)-eicosatetraenoyl-sn-glycero-3-phosphoethanolamine + CoA. The enzyme catalyses a 1-acyl-sn-glycero-3-phospho-L-serine + (9Z,12Z)-octadecadienoyl-CoA = 1-acyl-2-(9Z,12Z-octadecadienoyl)-sn-glycero-3-phospho-L-serine + CoA. It catalyses the reaction a 1-acyl-sn-glycero-3-phospho-L-serine + (5Z,8Z,11Z,14Z)-eicosatetraenoyl-CoA = 1-acyl-2-(5Z,8Z,11Z,14Z-eicosatetraenoyl)-sn-glycero-3-phospho-L-serine + CoA. The catalysed reaction is 1-hexadecanoyl-sn-glycero-3-phospho-L-serine + (9Z)-octadecenoyl-CoA = 1-hexadecanoyl-2-(9Z-octadecenoyl)-sn-glycero-3-phospho-L-serine + CoA. It carries out the reaction 1-(9Z-octadecenoyl)-sn-glycero-3-phospho-L-serine + (9Z)-octadecenoyl-CoA = 1,2-di-(9Z)-octadecenoyl-sn-glycero-3-phospho-L-serine + CoA. The enzyme catalyses 1-hexadecanoyl-sn-glycero-3-phospho-L-serine + (9Z,12Z)-octadecadienoyl-CoA = 1-hexadecanoyl-2-(9Z,12Z-octadecadienoyl)-sn-glycero-3-phospho-L-serine + CoA. It catalyses the reaction 1-(9Z-octadecenoyl)-sn-glycero-3-phospho-L-serine + (9Z,12Z)-octadecadienoyl-CoA = 1-(9Z-octadecenoyl)-2-(9Z,12Z-octadienoyl)-sn-glycero-3-phospho-L-serine + CoA. The catalysed reaction is 1-hexadecanoyl-sn-glycero-3-phospho-L-serine + (5Z,8Z,11Z,14Z)-eicosatetraenoyl-CoA = 1-hexadecanoyl-2-(5Z,8Z,11Z,14Z-eicosatetraenoyl)-sn-glycero-3-phospho-L-serine + CoA. It carries out the reaction 1-(9Z-octadecenoyl)-sn-glycero-3-phospho-L-serine + (5Z,8Z,11Z,14Z)-eicosatetraenoyl-CoA = 1-(9Z-octadecenoyl)-2-(5Z,8Z,11Z,14Z-eicosatetraenoyl)-sn-glycero-3-phospho-L-serine + CoA. The protein operates within lipid metabolism; phospholipid metabolism. Functionally, lysophospholipid O-acyltransferase (LPLAT) that catalyzes the reacylation step of the phospholipid remodeling process also known as the Lands cycle. Catalyzes transfer of the fatty acyl chain from fatty acyl-CoA to 1-acyl lysophospholipid to form various classes of phospholipids. Converts 1-acyl lysophosphatidylcholine (LPC) into phosphatidylcholine (PC) (LPCAT activity), 1-acyl lysophosphatidylserine (LPS) into phosphatidylserine (PS) (LPSAT activity) and 1-acyl lysophosphatidylethanolamine (LPE) into phosphatidylethanolamine (PE) (LPEAT activity). Favors polyunsaturated fatty acyl-CoAs as acyl donors compared to saturated fatty acyl-CoAs. Has higher activity for LPC acyl acceptors compared to LPEs and LPSs. Can also transfer the fatty acyl chain from fatty acyl-CoA to 1-O-alkyl lysophospholipid or 1-O-alkenyl lysophospholipid with lower efficiency. Acts as a major LPC O-acyltransferase in liver and intestine. As a component of the liver X receptor/NR1H3 or NR1H2 signaling pathway, mainly catalyzes the incorporation of arachidonate into PCs of endoplasmic reticulum (ER) membranes, increasing membrane dynamics and enabling triacylglycerols transfer to nascent very low-density lipoprotein (VLDL) particles. Promotes processing of sterol regulatory protein SREBF1 in hepatocytes, likely by facilitating the translocation of SREBF1-SCAP complex from ER to the Golgi apparatus. Participates in mechanisms by which the liver X receptor/NR1H3 or NR1H2 signaling pathway counteracts lipid-induced ER stress response and inflammation. Down-regulates hepatic inflammation by limiting arachidonic acid availability for synthesis of inflammatory eicosanoids, such as prostaglandins. In enterocytes, acts as a component of a gut-brain feedback loop that coordinates dietary lipid absorption and food intake. Regulates the abundance of PCs containing linoleate and arachidonate in enterocyte membranes, enabling passive diffusion of fatty acids and cholesterol across the membrane for efficient chylomicron assembly. In the intestinal crypt, acts as a component of dietary-responsive phospholipid-cholesterol axis, regulating the biosynthesis of cholesterol and its mitogenic effects on intestinal stem cells. This chain is Lysophospholipid acyltransferase 5 (Lpcat3), found in Rattus norvegicus (Rat).